An 87-amino-acid chain; its full sequence is Small ribosomal subunit protein bS20 (87 aa).

Positions 1–21 are disordered; it reads MANIKQQIKRNKTNEKRRLKN. Positions 7–20 are enriched in basic residues; that stretch reads QIKRNKTNEKRRLK.

This sequence belongs to the bacterial ribosomal protein bS20 family.

Its function is as follows. Binds directly to 16S ribosomal RNA. This chain is Small ribosomal subunit protein bS20, found in Phytoplasma mali (strain AT).